The chain runs to 695 residues: MKERLYPIEKIRNIGIVAHIDAGKTTTTERILFYTGTKHKLGNVDEGTTETDWMEQEKERGITITSAATSAFWKDHRINIIDTPGHVDFTVEVERSLRVLDGAIAVFDAQVGVEPQSETVWRQADRYRVPRIAFMNKMDKIGANFFNAIQTMKDKLGANPIALQVPIGSEAEFEGVVDLLTMEALYWTDENGQIIEKRSIPSNLIDFCESKREDLIAAVAEVDENIMELYIEEEEIPVDKLKEAIRTSTIQSKIVPVLCGSAFKNKGVQPLLDAVIDYLPSPLDMPPVKAFDGTTGEFVKDILPFEDGDFFALAFKIMADPFIGKLTFARVYSGTLNKGSYVVNTTKNKTERVSRLVFLHADKREEVDYIRAGDIVGLIGLKDTSTGDTLSDKECNLVLEKLEFPEPVISVSIEPETKDDEAKLGKALNALTEEDPSLRSYVDHDTGETILSGMGELHLEIIIDRIKREYKVNVKVGQPRVAYKETIKLPSEAEGKYIRQTGGRGQYGHVKLRVEPLPLNSEKEFEFVDKIVGGVIPREYIPAIENGVKESMQDGVLLGYPMVAIRVEVFDGSYHEVDSSEMAFKIAASMAFKDAIKKAKPVLLEPVMKVDVTTPEEYMGDIIADLSSRRGRIESFENVGGTNTRVVHAQVPLSELFGYATIMRSLSQGRATSSIQFSHYEEVPEQVTQKLLSRE.

Residues 9–283 (EKIRNIGIVA…AVIDYLPSPL (275 aa)) enclose the tr-type G domain. GTP is bound by residues 18–25 (AHIDAGKT), 82–86 (DTPGH), and 136–139 (NKMD).

This sequence belongs to the TRAFAC class translation factor GTPase superfamily. Classic translation factor GTPase family. EF-G/EF-2 subfamily.

Its subcellular location is the cytoplasm. Functionally, catalyzes the GTP-dependent ribosomal translocation step during translation elongation. During this step, the ribosome changes from the pre-translocational (PRE) to the post-translocational (POST) state as the newly formed A-site-bound peptidyl-tRNA and P-site-bound deacylated tRNA move to the P and E sites, respectively. Catalyzes the coordinated movement of the two tRNA molecules, the mRNA and conformational changes in the ribosome. The polypeptide is Elongation factor G (Petrotoga mobilis (strain DSM 10674 / SJ95)).